We begin with the raw amino-acid sequence, 423 residues long: Tyrosine--tRNA ligase (423 aa).

Tyr35 is an L-tyrosine binding site. Residues 40–49 (PTAPSLHAGH) carry the 'HIGH' region motif. 2 residues coordinate L-tyrosine: Tyr170 and Gln174. The 'KMSKS' region motif lies at 230-234 (KFGKS). Position 233 (Lys233) interacts with ATP. In terms of domain architecture, S4 RNA-binding spans 355–412 (DLITDLLVATGLSASKGAARRTIAEGGVSVNNVKIDSDEWTPQASDFLHGRWLVLRRG).

The protein belongs to the class-I aminoacyl-tRNA synthetase family. TyrS type 1 subfamily. As to quaternary structure, homodimer.

The protein localises to the cytoplasm. The enzyme catalyses tRNA(Tyr) + L-tyrosine + ATP = L-tyrosyl-tRNA(Tyr) + AMP + diphosphate + H(+). In terms of biological role, catalyzes the attachment of tyrosine to tRNA(Tyr) in a two-step reaction: tyrosine is first activated by ATP to form Tyr-AMP and then transferred to the acceptor end of tRNA(Tyr). The polypeptide is Tyrosine--tRNA ligase (Mycobacterium sp. (strain JLS)).